We begin with the raw amino-acid sequence, 656 residues long: Chaperone protein HtpG (656 aa).

Positions 1-364 (MSEQNPTDSK…SADLPLNVSR (364 aa)) are a; substrate-binding. Positions 365-583 (EILQESRDVK…EGELSPQMIQ (219 aa)) are b. Positions 584-656 (MLKQMGQDVP…LRRVNELLMK (73 aa)) are c.

Belongs to the heat shock protein 90 family. As to quaternary structure, homodimer.

It is found in the cytoplasm. Functionally, molecular chaperone. Has ATPase activity. This Psychrobacter arcticus (strain DSM 17307 / VKM B-2377 / 273-4) protein is Chaperone protein HtpG.